The following is a 259-amino-acid chain: DNA-directed RNA polymerase 30 kDa polypeptide (259 aa).

A TFIIS-type zinc finger spans residues 155–195; the sequence is YNTPCPNCKSRNTTPMMIQTRAADEPPLVRHACRDCKQHFK. Zn(2+) contacts are provided by C159, C162, C187, and C190. Positions 220-259 are disordered; sequence EILPDNNPSPPESPEPASPIDDGLIRATFDRNDEPPEDDE. Over residues 226–236 the composition is skewed to pro residues; that stretch reads NPSPPESPEPA.

Belongs to the poxviridae DNA-directed RNA polymerase 30 kDa subunit family. The DNA-dependent RNA polymerase (vRNAP) consists of eight subunits encoded by early viral genes and termed according to their apparent molecular masses Rpo147, Rpo132, Rpo35, Rpo30, Rpo22, Rpo19, Rpo18, and Rpo7. The same holoenzyme, with the addition of the transcription-specificity factor RAP94, is used for early gene expression.

The protein localises to the virion. It is found in the host cytoplasm. The enzyme catalyses RNA(n) + a ribonucleoside 5'-triphosphate = RNA(n+1) + diphosphate. Part of the DNA-dependent RNA polymerase which catalyzes the transcription of viral DNA into RNA using the four ribonucleoside triphosphates as substrates. Responsible for the transcription of early, intermediate and late genes. DNA-dependent RNA polymerase associates with the early transcription factor (ETF), itself composed of OPG118 and OPG134, thereby allowing the early genes transcription. Late transcription, and probably also intermediate transcription, require newly synthesized RNA polymerase. This chain is DNA-directed RNA polymerase 30 kDa polypeptide (OPG066), found in Bos taurus (Bovine).